A 212-amino-acid chain; its full sequence is Pyridoxine/pyridoxamine 5'-phosphate oxidase (212 aa).

Substrate contacts are provided by residues 8–11 (RRTY) and Lys-66. Residues 61 to 66 (RIVLLK), 76 to 77 (FT), Arg-82, Lys-83, and Gln-105 contribute to the FMN site. Substrate is bound by residues Tyr-123, Arg-127, and Ser-131. FMN is bound by residues 140 to 141 (QS) and Trp-184. 190-192 (RLH) contributes to the substrate binding site. Arg-194 serves as a coordination point for FMN.

Belongs to the pyridoxamine 5'-phosphate oxidase family. Homodimer. Requires FMN as cofactor.

The catalysed reaction is pyridoxamine 5'-phosphate + O2 + H2O = pyridoxal 5'-phosphate + H2O2 + NH4(+). It carries out the reaction pyridoxine 5'-phosphate + O2 = pyridoxal 5'-phosphate + H2O2. It participates in cofactor metabolism; pyridoxal 5'-phosphate salvage; pyridoxal 5'-phosphate from pyridoxamine 5'-phosphate: step 1/1. It functions in the pathway cofactor metabolism; pyridoxal 5'-phosphate salvage; pyridoxal 5'-phosphate from pyridoxine 5'-phosphate: step 1/1. Catalyzes the oxidation of either pyridoxine 5'-phosphate (PNP) or pyridoxamine 5'-phosphate (PMP) into pyridoxal 5'-phosphate (PLP). The polypeptide is Pyridoxine/pyridoxamine 5'-phosphate oxidase (Cupriavidus taiwanensis (strain DSM 17343 / BCRC 17206 / CCUG 44338 / CIP 107171 / LMG 19424 / R1) (Ralstonia taiwanensis (strain LMG 19424))).